We begin with the raw amino-acid sequence, 372 residues long: GTPase Obg (372 aa).

The Obg domain occupies methionine 1–leucine 159. Residues leucine 128–glycine 147 are disordered. Positions alanine 160–valine 334 constitute an OBG-type G domain. GTP-binding positions include glycine 166 to serine 173, phenylalanine 191 to alanine 195, aspartate 213 to glycine 216, asparagine 284 to aspartate 287, and serine 315 to leucine 317. Mg(2+)-binding residues include serine 173 and threonine 193.

This sequence belongs to the TRAFAC class OBG-HflX-like GTPase superfamily. OBG GTPase family. In terms of assembly, monomer. Mg(2+) serves as cofactor.

It is found in the cytoplasm. In terms of biological role, an essential GTPase which binds GTP, GDP and possibly (p)ppGpp with moderate affinity, with high nucleotide exchange rates and a fairly low GTP hydrolysis rate. Plays a role in control of the cell cycle, stress response, ribosome biogenesis and in those bacteria that undergo differentiation, in morphogenesis control. The protein is GTPase Obg of Burkholderia pseudomallei (strain 668).